Reading from the N-terminus, the 123-residue chain is Non-specific lipid-transfer protein (123 aa).

Positions 1–25 (MAVKKMVEAVFVVGLVVTMMNVWGA) are cleaved as a signal peptide. 4 cysteine pairs are disulfide-bonded: Cys-34–Cys-82, Cys-44–Cys-59, Cys-60–Cys-104, and Cys-80–Cys-119.

This sequence belongs to the plant LTP family.

Its function is as follows. Plant non-specific lipid-transfer proteins transfer phospholipids as well as galactolipids across membranes. May play a role in wax or cutin deposition in the cell walls of expanding epidermal cells and certain secretory tissues. The polypeptide is Non-specific lipid-transfer protein (Pinus taeda (Loblolly pine)).